Consider the following 547-residue polypeptide: uncharacterized protein (547 aa).

This sequence to B.subtilis RocB.

This is an uncharacterized protein from Bacillus subtilis (strain 168).